Consider the following 89-residue polypeptide: Small ribosomal subunit protein uS15 (89 aa).

Belongs to the universal ribosomal protein uS15 family. As to quaternary structure, part of the 30S ribosomal subunit. Forms a bridge to the 50S subunit in the 70S ribosome, contacting the 23S rRNA.

One of the primary rRNA binding proteins, it binds directly to 16S rRNA where it helps nucleate assembly of the platform of the 30S subunit by binding and bridging several RNA helices of the 16S rRNA. Its function is as follows. Forms an intersubunit bridge (bridge B4) with the 23S rRNA of the 50S subunit in the ribosome. The polypeptide is Small ribosomal subunit protein uS15 (Shewanella frigidimarina (strain NCIMB 400)).